The following is a 208-amino-acid chain: Probable acyl-homoserine-lactone synthase (208 aa).

It belongs to the autoinducer synthase family.

It carries out the reaction a fatty acyl-[ACP] + S-adenosyl-L-methionine = an N-acyl-L-homoserine lactone + S-methyl-5'-thioadenosine + holo-[ACP] + H(+). Required for the synthesis of OHHL (N-(3-oxooctanoyl)-L-homoserine lactone), an autoinducer molecule which binds to TraR and thus acts in the control of conjugal transfer. This is Probable acyl-homoserine-lactone synthase (traI) from Sinorhizobium fredii (strain NBRC 101917 / NGR234).